The chain runs to 423 residues: Serine hydroxymethyltransferase (423 aa).

Residue 121-123 (GHI) coordinates (6S)-5,6,7,8-tetrahydrofolate. Lys227 bears the N6-(pyridoxal phosphate)lysine mark. Glu242 provides a ligand contact to (6S)-5,6,7,8-tetrahydrofolate.

Belongs to the SHMT family. In terms of assembly, homodimer. The cofactor is pyridoxal 5'-phosphate.

The protein resides in the cytoplasm. It catalyses the reaction 5,10-methylenetetrahydromethanopterin + glycine + H2O = 5,6,7,8-tetrahydromethanopterin + L-serine. The protein operates within amino-acid biosynthesis; glycine biosynthesis; glycine from L-serine: step 1/1. Its function is as follows. Catalyzes the reversible interconversion of serine and glycine with tetrahydromethanopterin (H4MPT) serving as the one-carbon carrier. Cannot use tetrahydrofolate (THF or H4PteGlu) instead of H4MPT as the pteridine substrate. Also probably exhibits a pteridine-independent aldolase activity toward beta-hydroxyamino acids, producing glycine and aldehydes, via a retro-aldol mechanism. In Methanothermobacter thermautotrophicus (strain ATCC 29096 / DSM 1053 / JCM 10044 / NBRC 100330 / Delta H) (Methanobacterium thermoautotrophicum), this protein is Serine hydroxymethyltransferase.